The primary structure comprises 805 residues: Chloride channel protein (805 aa).

The Cytoplasmic segment spans residues Met1–Leu48. A run of 2 helical transmembrane segments spans residues Gly49 to Leu86 and Leu93 to Val116. The Selectivity filter part_1 motif lies at Gly122 to Pro126. Ser123 contacts chloride. Residues Ile125 to Ile132 constitute an intramembrane region (helical). 2 helical membrane passes run Leu141 to Ala159 and Glu166 to Leu184. The short motif at Gly164–Pro168 is the Selectivity filter part_2 element. Intramembrane regions (helical) lie at residues Ile201 to Cys213 and Pro217 to Ile225. 3 helical membrane-spanning segments follow: residues Tyr237 to Val256, Met283 to Met311, and Ile320 to Leu339. N-linked (GlcNAc...) asparagine glycosylation occurs at Asn365. A run of 2 helical transmembrane segments spans residues Leu388 to Ala408 and Gly416 to Leu439. Residues Gly416–Pro420 carry the Selectivity filter part_3 motif. Phe418 contributes to the chloride binding site. Positions Gly456–Val470 form an intramembrane region, helical. Residues Thr471 to His472 constitute an intramembrane region (note=Loop between two helices). An intramembrane region (helical) is located at residues Ala473–Thr484. An intramembrane region (note=Loop between two helices) is located at residues Gly485–His489. The helical transmembrane segment at Val490 to Leu507 threads the bilayer. At Gln508–Lys805 the chain is on the cytoplasmic side. Tyr512 is a binding site for chloride. The CBS 1 domain maps to Met543–Ala601. Disordered regions lie at residues Pro606 to Phe625 and Lys653 to Thr684. One can recognise a CBS 2 domain in the interval Ile719–Phe776.

It belongs to the chloride channel (TC 2.A.49) family. ClC-0 subfamily. As to quaternary structure, homodimer. Each subunit contains a channel ('Double barreled channel').

The protein localises to the membrane. Functionally, voltage-gated chloride channel. This channel is thought to ensure the high conductance of the non-innervated membrane of the electrocyte necessary for efficient current generation caused by sodium influx through the acetylcholine receptor at the innervated membrane. In Torpedo marmorata (Marbled electric ray), this protein is Chloride channel protein.